Here is a 198-residue protein sequence, read N- to C-terminus: Holliday junction branch migration complex subunit RuvA (198 aa).

The domain I stretch occupies residues 1-64; the sequence is MIAHLRGTLL…EDAIALFGFL (64 aa). The interval 65-141 is domain II; sequence DREEKRLFER…LDDLIAAAPA (77 aa). The flexible linker stretch occupies residues 141–145; the sequence is AAGPV. The tract at residues 146 to 198 is domain III; sequence AAGPAAEDVLSALLNLGYQRPAALKAIETAVEKDAAAGEDFDLLFRAALKLIR.

Belongs to the RuvA family. Homotetramer. Forms an RuvA(8)-RuvB(12)-Holliday junction (HJ) complex. HJ DNA is sandwiched between 2 RuvA tetramers; dsDNA enters through RuvA and exits via RuvB. An RuvB hexamer assembles on each DNA strand where it exits the tetramer. Each RuvB hexamer is contacted by two RuvA subunits (via domain III) on 2 adjacent RuvB subunits; this complex drives branch migration. In the full resolvosome a probable DNA-RuvA(4)-RuvB(12)-RuvC(2) complex forms which resolves the HJ.

The protein resides in the cytoplasm. Its function is as follows. The RuvA-RuvB-RuvC complex processes Holliday junction (HJ) DNA during genetic recombination and DNA repair, while the RuvA-RuvB complex plays an important role in the rescue of blocked DNA replication forks via replication fork reversal (RFR). RuvA specifically binds to HJ cruciform DNA, conferring on it an open structure. The RuvB hexamer acts as an ATP-dependent pump, pulling dsDNA into and through the RuvAB complex. HJ branch migration allows RuvC to scan DNA until it finds its consensus sequence, where it cleaves and resolves the cruciform DNA. The chain is Holliday junction branch migration complex subunit RuvA from Acidobacterium capsulatum (strain ATCC 51196 / DSM 11244 / BCRC 80197 / JCM 7670 / NBRC 15755 / NCIMB 13165 / 161).